Consider the following 1342-residue polypeptide: WD repeat-containing protein 19 (1342 aa).

WD repeat units follow at residues 11 to 51 (TWLG…RSEI), 52 to 92 (NLPG…TSQL), 95 to 134 (GMRD…KIPV), 137 to 175 (KHTK…IRQT), 273 to 311 (NHKD…DMYV), and 317 to 356 (EENK…LGDA). TPR repeat units lie at residues 736–769 (AQDL…AKHL), 775–808 (PFIS…DNKE), 840–873 (RVLK…DKAA), 895–928 (PKIH…QSVI), 951–984 (LDGA…NEAF), and 1020–1053 (EKRY…EDNV).

Component of the IFT complex A (IFT-A) complex. IFT-A complex is divided into a core subcomplex composed of IFT122:IFT140:WDR19 which is associated with TULP3 and a peripheral subcomplex composed of IFT43:WDR35:TTC21B. Interacts (via C-terminal region) with IFT122 (via C-terminal region). Interacts with BBS1. Interacts with TTC25. Some isoforms are tissue-specific. Highly expressed in the prostate. Lower expression in the cerebellum, pituitary gland, fetal lung, and pancreas. In normal prostate, expressed in both basal and luminal epithelial cells. No expression detected in fibromuscular stromal cells, endothelial cells, or infiltrating lymphocytes. Uniformed expression in prostate adenocarcinoma cells.

It localises to the cell projection. It is found in the cilium. The protein localises to the cytoplasm. Its subcellular location is the cytoskeleton. The protein resides in the cilium basal body. It localises to the photoreceptor outer segment. It is found in the flagellum. As component of the IFT complex A (IFT-A), a complex required for retrograde ciliary transport and entry into cilia of G protein-coupled receptors (GPCRs), it is involved in cilia function and/or assembly. Essential for functional IFT-A assembly and ciliary entry of GPCRs. Associates with the BBSome complex to mediate ciliary transport. The polypeptide is WD repeat-containing protein 19 (Homo sapiens (Human)).